Consider the following 318-residue polypeptide: tRNA pseudouridine synthase B (318 aa).

Catalysis depends on aspartate 47, which acts as the Nucleophile.

Belongs to the pseudouridine synthase TruB family. Type 1 subfamily.

The catalysed reaction is uridine(55) in tRNA = pseudouridine(55) in tRNA. In terms of biological role, responsible for synthesis of pseudouridine from uracil-55 in the psi GC loop of transfer RNAs. The protein is tRNA pseudouridine synthase B of Shewanella putrefaciens (strain CN-32 / ATCC BAA-453).